A 250-amino-acid polypeptide reads, in one-letter code: Silencing boundary-establishment protein FUB1 (250 aa).

The disordered stretch occupies residues 179–250 (PDWSGGLPNP…GFGGSGSGFI (72 aa)). Positions 202–213 (PNRRPAPRREDM) are enriched in basic and acidic residues. A compositionally biased stretch (gly residues) spans 229-250 (PGSGGFGGSGSGGFGGSGSGFI).

Belongs to the proteasome inhibitor PI31 family. In terms of assembly, interacts with the 20S proteasome.

In terms of biological role, plays a role in the establishment of transcriptional silencing boundaries, preventing the propagation of heterochromatic silencing. The polypeptide is Silencing boundary-establishment protein FUB1 (Saccharomyces cerevisiae (strain ATCC 204508 / S288c) (Baker's yeast)).